The following is a 712-amino-acid chain: Ribosomal RNA large subunit methyltransferase K/L (712 aa).

The region spanning 43 to 154 is the THUMP domain; sequence TAYRCCLWTR…GEKGVLGLDM (112 aa).

This sequence belongs to the methyltransferase superfamily. RlmKL family.

The protein localises to the cytoplasm. It catalyses the reaction guanosine(2445) in 23S rRNA + S-adenosyl-L-methionine = N(2)-methylguanosine(2445) in 23S rRNA + S-adenosyl-L-homocysteine + H(+). It carries out the reaction guanosine(2069) in 23S rRNA + S-adenosyl-L-methionine = N(2)-methylguanosine(2069) in 23S rRNA + S-adenosyl-L-homocysteine + H(+). Its function is as follows. Specifically methylates the guanine in position 2445 (m2G2445) and the guanine in position 2069 (m7G2069) of 23S rRNA. The protein is Ribosomal RNA large subunit methyltransferase K/L of Photobacterium profundum (strain SS9).